The sequence spans 949 residues: Lon protease homolog, mitochondrial (949 aa).

The N-terminal 65 residues, 1-65 (MAASTGYVRL…VLPGGVQWRG (65 aa)), are a transit peptide targeting the mitochondrion. 2 disordered regions span residues 68–94 (DSGNRGGSDETSEGGAEDGATASTGEG) and 213–240 (EGLEPEAEKQKSRRKLKRGKKEVEDELG). Residues 112–359 (LPLIAITRNP…KALSLLKKEF (248 aa)) form the Lon N-terminal domain. Residues 223–232 (KSRRKLKRGK) are compositionally biased toward basic residues. An ATP-binding site is contributed by 512 to 519 (GPPGVGKT). Positions 748 to 938 (VTPPGVVMGL…RDIFPIAFPR (191 aa)) constitute a Lon proteolytic domain. Catalysis depends on residues S844 and K887.

Belongs to the peptidase S16 family. As to quaternary structure, homohexamer. Organized in a ring with a central cavity. The ATP-binding and proteolytic domains (AP-domain) form a hexameric chamber, while the N-terminal domain is arranged as a trimer of dimers. DNA and RNA binding is stimulated by substrate and inhibited by ATP binding. Interacts with TWNK and mitochondrial DNA polymerase subunit POLG. Detected in liver &gt; heart &gt; kidney &gt; testis.

Its subcellular location is the mitochondrion matrix. The catalysed reaction is Hydrolysis of proteins in presence of ATP.. In terms of biological role, ATP-dependent serine protease that mediates the selective degradation of misfolded, unassembled or oxidatively damaged polypeptides as well as certain short-lived regulatory proteins in the mitochondrial matrix. Endogenous substrates include mitochondrial steroidogenic acute regulatory (StAR) protein, DELE1, helicase Twinkle (TWNK) and the large ribosomal subunit protein MRPL32/bL32m. MRPL32/bL32m is protected from degradation by LONP1 when it is bound to a nucleic acid (RNA), but TWNK is not. May also have a chaperone function in the assembly of inner membrane protein complexes. Participates in the regulation of mitochondrial gene expression and in the maintenance of the integrity of the mitochondrial genome. Binds to mitochondrial promoters and RNA in a single-stranded, site-specific, and strand-specific manner. May regulate mitochondrial DNA replication and/or gene expression using site-specific, single-stranded DNA binding to target the degradation of regulatory proteins binding to adjacent sites in mitochondrial promoters. The polypeptide is Lon protease homolog, mitochondrial (Lonp1) (Mus musculus (Mouse)).